We begin with the raw amino-acid sequence, 355 residues long: Peptide chain release factor 1 (355 aa).

N5-methylglutamine is present on Q231.

The protein belongs to the prokaryotic/mitochondrial release factor family. Methylated by PrmC. Methylation increases the termination efficiency of RF1.

The protein localises to the cytoplasm. Functionally, peptide chain release factor 1 directs the termination of translation in response to the peptide chain termination codons UAG and UAA. The sequence is that of Peptide chain release factor 1 from Erythrobacter litoralis (strain HTCC2594).